The sequence spans 392 residues: DNA replication protein (392 aa).

The segment at 322 to 341 (NGGNKKISEGTSRAQRKAPH) is disordered.

In terms of biological role, may play a role in viral DNA replication. Found associated with a viral DNA origin of replication and with host membranes, may attach this origin to the bacterial envelope to initiate replication. This is DNA replication protein (69) from Enterobacteria phage T4 (Bacteriophage T4).